The chain runs to 362 residues: UDP-N-acetylglucosamine--N-acetylmuramyl-(pentapeptide) pyrophosphoryl-undecaprenol N-acetylglucosamine transferase (362 aa).

Residues 14–16 (TGG), Arg170, Ser199, and Gln289 contribute to the UDP-N-acetyl-alpha-D-glucosamine site.

The protein belongs to the glycosyltransferase 28 family. MurG subfamily.

It is found in the cell inner membrane. It carries out the reaction di-trans,octa-cis-undecaprenyl diphospho-N-acetyl-alpha-D-muramoyl-L-alanyl-D-glutamyl-meso-2,6-diaminopimeloyl-D-alanyl-D-alanine + UDP-N-acetyl-alpha-D-glucosamine = di-trans,octa-cis-undecaprenyl diphospho-[N-acetyl-alpha-D-glucosaminyl-(1-&gt;4)]-N-acetyl-alpha-D-muramoyl-L-alanyl-D-glutamyl-meso-2,6-diaminopimeloyl-D-alanyl-D-alanine + UDP + H(+). Its pathway is cell wall biogenesis; peptidoglycan biosynthesis. In terms of biological role, cell wall formation. Catalyzes the transfer of a GlcNAc subunit on undecaprenyl-pyrophosphoryl-MurNAc-pentapeptide (lipid intermediate I) to form undecaprenyl-pyrophosphoryl-MurNAc-(pentapeptide)GlcNAc (lipid intermediate II). The chain is UDP-N-acetylglucosamine--N-acetylmuramyl-(pentapeptide) pyrophosphoryl-undecaprenol N-acetylglucosamine transferase from Borrelia hermsii (strain HS1 / DAH).